The following is a 540-amino-acid chain: Na(+)/H(+) antiporter NhaS2 (540 aa).

A run of 10 helical transmembrane segments spans residues 29–49, 71–91, 117–137, 138–158, 207–227, 256–276, 296–316, 323–343, 358–378, and 389–409; these read ITTLVENLIILLLVATLVALV, GLSVGLNPELILNFFLPILIF, VVISAAITAVLLKIGLGLAWV, TAAGVSVILTITDTVSVIAAF, IFVAFVGGGLVGLGLGYLCVG, LGVSSAIAVVVAGLVIGNLAL, FGVNTLIFLLVGIEVYPSILL, LIAIVAYQIGRVFSIYPLLYL, VLIAGNVKGSLSMALALALPL, and LVFSTVMVSLIGQGLSLPWVV.

Belongs to the monovalent cation:proton antiporter 1 (CPA1) transporter (TC 2.A.36) family.

The protein localises to the cell membrane. Its function is as follows. Required for Na(+) uptake into the cell, especially at low external Na(+) concentrations or low Na(+)/K(+) ratios. May be part of a sodium cycle that permits re-entry of sodium into the cell. In Synechocystis sp. (strain ATCC 27184 / PCC 6803 / Kazusa), this protein is Na(+)/H(+) antiporter NhaS2 (nhaS2).